The following is a 643-amino-acid chain: Threonine--tRNA ligase (643 aa).

Residues 1 to 61 enclose the TGS domain; the sequence is MVAISLPDGS…TTDASVSLIT (61 aa). Positions 243-534 are catalytic; it reads DHRRVGQEMD…LIENCAGRFP (292 aa). The Zn(2+) site is built by C334, H385, and H511.

This sequence belongs to the class-II aminoacyl-tRNA synthetase family. Homodimer. It depends on Zn(2+) as a cofactor.

The protein localises to the cytoplasm. The catalysed reaction is tRNA(Thr) + L-threonine + ATP = L-threonyl-tRNA(Thr) + AMP + diphosphate + H(+). Functionally, catalyzes the attachment of threonine to tRNA(Thr) in a two-step reaction: L-threonine is first activated by ATP to form Thr-AMP and then transferred to the acceptor end of tRNA(Thr). Also edits incorrectly charged L-seryl-tRNA(Thr). The chain is Threonine--tRNA ligase from Rhodospirillum rubrum (strain ATCC 11170 / ATH 1.1.1 / DSM 467 / LMG 4362 / NCIMB 8255 / S1).